Here is a 394-residue protein sequence, read N- to C-terminus: 8-amino-7-oxononanoate synthase (394 aa).

A substrate-binding site is contributed by arginine 18. 105-106 (GY) contributes to the pyridoxal 5'-phosphate binding site. Histidine 130 serves as a coordination point for substrate. Pyridoxal 5'-phosphate-binding residues include serine 175, histidine 203, and threonine 232. Residue lysine 235 is modified to N6-(pyridoxal phosphate)lysine. Threonine 349 lines the substrate pocket.

It belongs to the class-II pyridoxal-phosphate-dependent aminotransferase family. BioF subfamily. Homodimer. It depends on pyridoxal 5'-phosphate as a cofactor.

The enzyme catalyses 6-carboxyhexanoyl-[ACP] + L-alanine + H(+) = (8S)-8-amino-7-oxononanoate + holo-[ACP] + CO2. It functions in the pathway cofactor biosynthesis; biotin biosynthesis. Catalyzes the decarboxylative condensation of pimeloyl-[acyl-carrier protein] and L-alanine to produce 8-amino-7-oxononanoate (AON), [acyl-carrier protein], and carbon dioxide. The protein is 8-amino-7-oxononanoate synthase of Marinobacter nauticus (strain ATCC 700491 / DSM 11845 / VT8) (Marinobacter aquaeolei).